We begin with the raw amino-acid sequence, 333 residues long: Phosphate acyltransferase (333 aa).

Belongs to the PlsX family. Homodimer. Probably interacts with PlsY.

The protein resides in the cytoplasm. It catalyses the reaction a fatty acyl-[ACP] + phosphate = an acyl phosphate + holo-[ACP]. It participates in lipid metabolism; phospholipid metabolism. Catalyzes the reversible formation of acyl-phosphate (acyl-PO(4)) from acyl-[acyl-carrier-protein] (acyl-ACP). This enzyme utilizes acyl-ACP as fatty acyl donor, but not acyl-CoA. This chain is Phosphate acyltransferase, found in Pelagibacter ubique (strain HTCC1062).